Consider the following 272-residue polypeptide: Cytochrome b-c1 complex subunit Rieske, mitochondrial (272 aa).

At 77–104 (VHNDVTVPDFSAYRREDVMDATTSSQTS) the chain is on the mitochondrial matrix side. A helical transmembrane segment spans residues 105 to 138 (SEDRKGFSYLVTATACVATAYAAKNVVTQFISSL). Topologically, residues 139 to 272 (SASADVLALS…FVGDDLVVVG (134 aa)) are mitochondrial intermembrane. The Rieske domain occupies 185-270 (EAEVDVSKLR…YQFVGDDLVV (86 aa)). [2Fe-2S] cluster contacts are provided by Cys-215, His-217, Leu-218, Cys-234, His-237, and Ser-239. Residues Cys-220 and Cys-236 are joined by a disulfide bond.

Belongs to the Rieske iron-sulfur protein family. As to quaternary structure, component of the ubiquinol-cytochrome c oxidoreductase (cytochrome b-c1 complex, complex III, CIII), a multisubunit enzyme composed of 11 subunits. The complex is composed of 3 respiratory subunits cytochrome b, cytochrome c1 and Rieske protein UQCRFS1, 2 core protein subunits UQCRC1/QCR1 and UQCRC2/QCR2, and 6 low-molecular weight protein subunits UQCRH/QCR6, UQCRB/QCR7, UQCRQ/QCR8, UQCR10/QCR9, UQCR11/QCR10 and subunit 9, the cleavage product of Rieske protein UQCRFS1. The complex exists as an obligatory dimer and forms supercomplexes (SCs) in the inner mitochondrial membrane with NADH-ubiquinone oxidoreductase (complex I, CI) and cytochrome c oxidase (complex IV, CIV), resulting in different assemblies (supercomplex SCI(1)III(2)IV(1) and megacomplex MCI(2)III(2)IV(2)). Incorporation of the Rieske protein UQCRFS1 is the penultimate step in complex III assembly. Interacts with TTC19, which is involved in the clearance of UQCRFS1 fragments. Component of the ubiquinol-cytochrome c oxidoreductase (cytochrome b-c1 complex, complex III, CIII). Subunit 9 corresponds to the mitochondrial targeting sequence (MTS) of Rieske protein UQCRFS1. It is retained after processing and incorporated inside complex III, where it remains bound to the complex and localizes between the 2 core subunits UQCRC1/QCR1 and UQCRC2/QCR2. It depends on [2Fe-2S] cluster as a cofactor. In terms of processing, proteolytic processing is necessary for the correct insertion of UQCRFS1 in the complex III dimer. Several fragments are generated during UQCRFS1 insertion, most probably due to the endogenous matrix-processing peptidase (MPP) activity of the 2 core protein subunits UQCRC1/QCR1 and UQCRC2/QCR2, which are homologous to the 2 mitochondrial-processing peptidase (MPP) subunits beta-MPP and alpha-MPP respectively. The action of the protease is also necessary for the clearance of the UQCRFS1 fragments.

It is found in the mitochondrion inner membrane. The catalysed reaction is a quinol + 2 Fe(III)-[cytochrome c](out) = a quinone + 2 Fe(II)-[cytochrome c](out) + 2 H(+)(out). Functionally, component of the ubiquinol-cytochrome c oxidoreductase, a multisubunit transmembrane complex that is part of the mitochondrial electron transport chain which drives oxidative phosphorylation. The respiratory chain contains 3 multisubunit complexes succinate dehydrogenase (complex II, CII), ubiquinol-cytochrome c oxidoreductase (cytochrome b-c1 complex, complex III, CIII) and cytochrome c oxidase (complex IV, CIV), that cooperate to transfer electrons derived from NADH and succinate to molecular oxygen, creating an electrochemical gradient over the inner membrane that drives transmembrane transport and the ATP synthase. The cytochrome b-c1 complex catalyzes electron transfer from ubiquinol to cytochrome c, linking this redox reaction to translocation of protons across the mitochondrial inner membrane, with protons being carried across the membrane as hydrogens on the quinol. In the process called Q cycle, 2 protons are consumed from the matrix, 4 protons are released into the intermembrane space and 2 electrons are passed to cytochrome c. The Rieske protein is a catalytic core subunit containing a [2Fe-2S] iron-sulfur cluster. It cycles between 2 conformational states during catalysis to transfer electrons from the quinol bound in the Q(0) site in cytochrome b to cytochrome c1. Incorporation of UQCRFS1 is the penultimate step in complex III assembly. In terms of biological role, component of the ubiquinol-cytochrome c oxidoreductase (cytochrome b-c1 complex, complex III, CIII). UQCRFS1 undergoes proteolytic processing once it is incorporated in the complex III dimer. One of the fragments, called subunit 9, corresponds to its mitochondrial targeting sequence (MTS). The proteolytic processing is necessary for the correct insertion of UQCRFS1 in the complex III dimer, but the persistence of UQCRFS1-derived fragments may prevent newly imported UQCRFS1 to be processed and assembled into complex III and is detrimental for the complex III structure and function. The protein is Cytochrome b-c1 complex subunit Rieske, mitochondrial (UQCRFS1) of Gallus gallus (Chicken).